Reading from the N-terminus, the 263-residue chain is Urease accessory protein UreD 1 (263 aa).

The protein belongs to the UreD family. UreD, UreF and UreG form a complex that acts as a GTP-hydrolysis-dependent molecular chaperone, activating the urease apoprotein by helping to assemble the nickel containing metallocenter of UreC. The UreE protein probably delivers the nickel.

The protein localises to the cytoplasm. Functionally, required for maturation of urease via the functional incorporation of the urease nickel metallocenter. The polypeptide is Urease accessory protein UreD 1 (Synechococcus sp. (strain JA-3-3Ab) (Cyanobacteria bacterium Yellowstone A-Prime)).